The primary structure comprises 143 residues: Myocilin opposite strand protein (143 aa).

Residues 65–111 (MATRDETITKKSGEGEEMLPSMGMDHESPSKAHLMVPPAPPPSPADA) form a disordered region. The span at 66-78 (ATRDETITKKSGE) shows a compositional bias: basic and acidic residues.

This chain is Myocilin opposite strand protein, found in Mus musculus (Mouse).